The following is an 875-amino-acid chain: uncharacterized protein (875 aa).

The disordered stretch occupies residues 83 to 149; that stretch reads PFQPPPPQPF…QPPQPPPQQL (67 aa). Residues 101-147 show a composition bias toward pro residues; it reads QQPPQPPPDQPQQPQPPQQPPQQPPQQQPQPPQPPQQPPQPPQPPPQ.

This is an uncharacterized protein from Orgyia pseudotsugata multicapsid polyhedrosis virus (OpMNPV).